The sequence spans 108 residues: Replication restart protein PriB (108 aa).

The region spanning 8–108 (VDNRFSLIGK…LHAEQIEFIE (101 aa)) is the SSB domain.

It belongs to the PriB family. Homodimer. Interacts with PriA and DnaT. Component of the replication restart primosome. Primosome assembly occurs via a 'hand-off' mechanism. PriA binds to replication forks, subsequently PriB then DnaT bind; DnaT then displaces ssDNA to generate the helicase loading substrate.

In terms of biological role, involved in the restart of stalled replication forks, which reloads the replicative helicase on sites other than the origin of replication; the PriA-PriB pathway is the major replication restart pathway. During primosome assembly it facilitates complex formation between PriA and DnaT on DNA; stabilizes PriA on DNA. Stimulates the DNA unwinding activity of PriA helicase. The sequence is that of Replication restart protein PriB from Histophilus somni (strain 2336) (Haemophilus somnus).